We begin with the raw amino-acid sequence, 290 residues long: Acetyl-coenzyme A carboxylase carboxyl transferase subunit beta (290 aa).

Positions 28 to 290 (IMTKCPKCKK…SRGGDEWHTN (263 aa)) constitute a CoA carboxyltransferase N-terminal domain. Zn(2+) contacts are provided by Cys32, Cys35, Cys51, and Cys54. Residues 32–54 (CPKCKKIMYTKELVKNLRVCISC) form a C4-type zinc finger.

This sequence belongs to the AccD/PCCB family. Acetyl-CoA carboxylase is a heterohexamer composed of biotin carboxyl carrier protein (AccB), biotin carboxylase (AccC) and two subunits each of ACCase subunit alpha (AccA) and ACCase subunit beta (AccD). It depends on Zn(2+) as a cofactor.

The protein resides in the cytoplasm. It carries out the reaction N(6)-carboxybiotinyl-L-lysyl-[protein] + acetyl-CoA = N(6)-biotinyl-L-lysyl-[protein] + malonyl-CoA. The protein operates within lipid metabolism; malonyl-CoA biosynthesis; malonyl-CoA from acetyl-CoA: step 1/1. Component of the acetyl coenzyme A carboxylase (ACC) complex. Biotin carboxylase (BC) catalyzes the carboxylation of biotin on its carrier protein (BCCP) and then the CO(2) group is transferred by the transcarboxylase to acetyl-CoA to form malonyl-CoA. The protein is Acetyl-coenzyme A carboxylase carboxyl transferase subunit beta of Anoxybacillus flavithermus (strain DSM 21510 / WK1).